Consider the following 645-residue polypeptide: Translation factor GUF1, mitochondrial (645 aa).

The region spanning 44–228 (ENYRNFSIVA…AIIDRIPPPT (185 aa)) is the tr-type G domain. GTP is bound by residues 53 to 60 (AHVDHGKS), 120 to 124 (DTPGH), and 174 to 177 (NKID).

The protein belongs to the TRAFAC class translation factor GTPase superfamily. Classic translation factor GTPase family. LepA subfamily.

The protein localises to the mitochondrion inner membrane. The catalysed reaction is GTP + H2O = GDP + phosphate + H(+). In terms of biological role, promotes mitochondrial protein synthesis. May act as a fidelity factor of the translation reaction, by catalyzing a one-codon backward translocation of tRNAs on improperly translocated ribosomes. Binds to mitochondrial ribosomes in a GTP-dependent manner. The chain is Translation factor GUF1, mitochondrial from Saccharomyces cerevisiae (strain RM11-1a) (Baker's yeast).